Here is a 136-residue protein sequence, read N- to C-terminus: Large ribosomal subunit protein uL16 (136 aa).

This sequence belongs to the universal ribosomal protein uL16 family. In terms of assembly, part of the 50S ribosomal subunit.

In terms of biological role, binds 23S rRNA and is also seen to make contacts with the A and possibly P site tRNAs. This chain is Large ribosomal subunit protein uL16, found in Karelsulcia muelleri (strain GWSS) (Sulcia muelleri).